The following is a 391-amino-acid chain: Aspartate aminotransferase (391 aa).

Glycine 40 and asparagine 176 together coordinate L-aspartate. Position 236 is an N6-(pyridoxal phosphate)lysine (lysine 236). Arginine 366 contributes to the L-aspartate binding site.

The protein belongs to the class-I pyridoxal-phosphate-dependent aminotransferase family. As to quaternary structure, homodimer. The cofactor is pyridoxal 5'-phosphate.

The protein resides in the cytoplasm. It catalyses the reaction L-aspartate + 2-oxoglutarate = oxaloacetate + L-glutamate. The protein is Aspartate aminotransferase (aspC) of Pyrococcus horikoshii (strain ATCC 700860 / DSM 12428 / JCM 9974 / NBRC 100139 / OT-3).